The primary structure comprises 658 residues: uncharacterized protein (658 aa).

The span at 516-639 (SSNNSNSSNN…NNNNNSSQGG (124 aa)) shows a compositional bias: low complexity. The disordered stretch occupies residues 516–646 (SSNNSNSSNN…QGGNSQGGSG (131 aa)).

The protein resides in the cytoplasm. This is an uncharacterized protein from Schizosaccharomyces pombe (strain 972 / ATCC 24843) (Fission yeast).